Here is a 414-residue protein sequence, read N- to C-terminus: Serine/threonine transporter SstT (414 aa).

Transmembrane regions (helical) follow at residues Gly-22–Phe-42, Ile-54–Ala-74, Ile-89–Phe-109, Ala-148–Leu-168, Ile-189–Leu-209, Leu-223–Val-243, Met-305–Leu-325, and Ile-337–Ile-357.

It belongs to the dicarboxylate/amino acid:cation symporter (DAACS) (TC 2.A.23) family.

Its subcellular location is the cell inner membrane. The enzyme catalyses L-serine(in) + Na(+)(in) = L-serine(out) + Na(+)(out). It catalyses the reaction L-threonine(in) + Na(+)(in) = L-threonine(out) + Na(+)(out). Functionally, involved in the import of serine and threonine into the cell, with the concomitant import of sodium (symport system). The chain is Serine/threonine transporter SstT from Haemophilus influenzae (strain PittGG).